Here is a 397-residue protein sequence, read N- to C-terminus: Tryptophan synthase beta chain (397 aa).

K91 carries the post-translational modification N6-(pyridoxal phosphate)lysine.

Belongs to the TrpB family. Tetramer of two alpha and two beta chains. Pyridoxal 5'-phosphate serves as cofactor.

It carries out the reaction (1S,2R)-1-C-(indol-3-yl)glycerol 3-phosphate + L-serine = D-glyceraldehyde 3-phosphate + L-tryptophan + H2O. It participates in amino-acid biosynthesis; L-tryptophan biosynthesis; L-tryptophan from chorismate: step 5/5. In terms of biological role, the beta subunit is responsible for the synthesis of L-tryptophan from indole and L-serine. The protein is Tryptophan synthase beta chain of Bacillus cereus (strain ZK / E33L).